Reading from the N-terminus, the 302-residue chain is MADRRRVHAWARARPAAPEPAPPTPSAAAPSVAPGPAATPPDPAVEQEFTRLQTQYDARLGLYAVDTGSGESVAFRADERFAFASTFKALAAAAVLDSTTPQQLDQVVRYSKDELLENSPITKDHVATGMTLRELCDAAVRFSDNTAGNLLLKHVGGPQGLDAALTAVGDEVTSADRWEPELNSAVPGDVRDTSTPRALAHDLRQFVLGDALAEDDRALLTDWLRRNTTGGTVIRAGVPADWVVGDKTGSGYYGGRNDIAVLWPPNRAPIVMAVMTSREEPRAKRADALLADAARVAVTALG.

The segment covering methionine 1 to alanine 11 has biased composition (basic residues). An N-terminal signal peptide occupies residues methionine 1–alanine 29. The segment at methionine 1–proline 43 is disordered. Positions serine 26–proline 36 are enriched in low complexity. Serine 85 functions as the Acyl-ester intermediate in the catalytic mechanism. A substrate-binding site is contributed by serine 143. The active-site Proton acceptor is glutamate 179. Lysine 247–glycine 249 lines the substrate pocket.

It belongs to the class-A beta-lactamase family.

The protein localises to the secreted. The catalysed reaction is a beta-lactam + H2O = a substituted beta-amino acid. Functionally, active on penicillins but not on cephalosporins. The polypeptide is Beta-lactamase (bla) (Amycolatopsis lactamdurans (Nocardia lactamdurans)).